The chain runs to 212 residues: Chloramphenicol acetyltransferase (212 aa).

Residue His186 is the Proton acceptor of the active site.

This sequence belongs to the chloramphenicol acetyltransferase family. As to quaternary structure, homotrimer.

The catalysed reaction is chloramphenicol + acetyl-CoA = chloramphenicol 3-acetate + CoA. This enzyme is an effector of chloramphenicol resistance in bacteria. The protein is Chloramphenicol acetyltransferase (catD) of Clostridioides difficile (Peptoclostridium difficile).